We begin with the raw amino-acid sequence, 328 residues long: Cysteine proteinase COT44 (328 aa).

A propeptide spans methionine 1–glutamate 99 (activation peptide). Asparagine 48 and asparagine 60 each carry an N-linked (GlcNAc...) asparagine glycan. 3 disulfides stabilise this stretch: cysteine 121–cysteine 163, cysteine 155–cysteine 196, and cysteine 254–cysteine 305. The active site involves cysteine 124. Active-site residues include histidine 260 and asparagine 280.

Belongs to the peptidase C1 family. In terms of tissue distribution, present in both cotyledons and axes.

Functionally, may function in an early event in cortical cell differentiation. The protein is Cysteine proteinase COT44 of Brassica napus (Rape).